The sequence spans 126 residues: uncharacterized protein (126 aa).

Over 1–9 the chain is Extracellular; sequence MCTYIITQS. A helical membrane pass occupies residues 10–30; that stretch reads FFFLPCLSFLFFKLVGFFDSV. The Cytoplasmic segment spans residues 31 to 73; the sequence is FTAGKSLRIMFELPIFDKLTSCFAAIDCSATSLDIPFAEEELF. A helical transmembrane segment spans residues 74 to 94; it reads LMLVSEPVLIPFLFVFEFMLI. Topologically, residues 95 to 126 are extracellular; it reads CKPCGSRSRFGFPVKNVSDFEETLEFDPTLLV.

It localises to the membrane. This is an uncharacterized protein from Saccharomyces cerevisiae (strain ATCC 204508 / S288c) (Baker's yeast).